Here is a 226-residue protein sequence, read N- to C-terminus: Prolactin (226 aa).

A signal peptide spans 1-29 (MNSQGSDRKAVTLLLLVMSNLLFCQNAHP). Cys-33 and Cys-38 are oxidised to a cystine. Ser-53 and Ser-117 each carry phosphoserine. Cystine bridges form between Cys-85–Cys-201 and Cys-218–Cys-226.

Belongs to the somatotropin/prolactin family. As to quaternary structure, interacts with PRLR.

It localises to the secreted. Its function is as follows. Prolactin acts primarily on the mammary gland by promoting lactation. This Mesocricetus auratus (Golden hamster) protein is Prolactin (PRL).